The chain runs to 558 residues: Potassium-transporting ATPase potassium-binding subunit 1 (558 aa).

12 helical membrane passes run 1–21, 66–86, 127–147, 166–186, 245–265, 281–301, 327–347, 354–374, 377–397, 416–436, 482–502, and 531–551; these read MEII…SGYL, FNGF…WLFL, MIVM…VCIA, IVRF…ILLM, IWSN…MLFL, ALIL…LTMW, FGAG…TGSV, LTPL…VFGG, VGLM…SLMV, IVLV…LAFM, ISTG…QLMI, and IVFI…LGPI.

It belongs to the KdpA family. The system is composed of three essential subunits: KdpA, KdpB and KdpC.

It is found in the cell membrane. Part of the high-affinity ATP-driven potassium transport (or Kdp) system, which catalyzes the hydrolysis of ATP coupled with the electrogenic transport of potassium into the cytoplasm. This subunit binds the extracellular potassium ions and delivers the ions to the membrane domain of KdpB through an intramembrane tunnel. The sequence is that of Potassium-transporting ATPase potassium-binding subunit 1 from Staphylococcus aureus (strain MRSA252).